The chain runs to 444 residues: Cholecystokinin receptor type A (444 aa).

Residues 1–56 (MSHSPARQHLVESSRMDVVDSLLMNGSNITPPCELGLENETLFCLDQPQPSKEWQS) lie on the Extracellular side of the membrane. 2 N-linked (GlcNAc...) asparagine glycosylation sites follow: asparagine 25 and asparagine 39. A disulfide bridge links cysteine 33 with cysteine 44. The helical transmembrane segment at 57–82 (ALQILLYSIIFLLSVLGNTLVITVLI) threads the bilayer. Over 83 to 92 (RNKRMRTVTN) the chain is Cytoplasmic. A helical membrane pass occupies residues 93–119 (IFLLSLAVSDLMLCLFCMPFNLIPNLL). Residues 120–130 (KDFIFGSAVCK) lie on the Extracellular side of the membrane. An intrachain disulfide couples cysteine 129 to cysteine 211. The helical transmembrane segment at 131–152 (TTTYFMGTSVSVSTFNLVAISL) threads the bilayer. Residues 153-172 (ERYGAICRPLQSRVWQTKSH) lie on the Cytoplasmic side of the membrane. The helical transmembrane segment at 173–193 (ALKVIAATWCLSFTIMTPYPI) threads the bilayer. The Extracellular segment spans residues 194 to 225 (YSNLVPFTKNNNQTANMCRFLLPSDAMQQSWQ). N-linked (GlcNAc...) asparagine glycosylation is present at asparagine 205. A helical membrane pass occupies residues 226–249 (TFLLLILFLLPGIVMVVAYGLISL). Residues 250 to 329 (ELYQGIKFDA…NLIAKKRVIR (80 aa)) are Cytoplasmic-facing. Residues 263–288 (KSAKEKKPSTGSSTRYEDSDGCYLQK) are disordered. A helical transmembrane segment spans residues 330-350 (MLIVIVVLFFLCWMPIFSANA). Residues 351–365 (WRAYDTVSAEKHLSG) lie on the Extracellular side of the membrane. Residues 366-389 (TPISFILLLSYTSSCVNPIIYCFM) traverse the membrane as a helical segment. The Cytoplasmic portion of the chain corresponds to 390–444 (NKRFRLGFMATFPCCPNPGPPGVRGEVGEEEDGRTIRALLSRYSYSHMSTSAPPP). The S-palmitoyl cysteine moiety is linked to residue cysteine 403.

Belongs to the G-protein coupled receptor 1 family. As to expression, pancreas and brain. Also expressed in the gastrointestinal system and vagus nerve.

The protein localises to the cell membrane. Its function is as follows. Receptor for cholecystokinin. Mediates pancreatic growth and enzyme secretion, smooth muscle contraction of the gall bladder and stomach. Has a 1000-fold higher affinity for CCK rather than for gastrin. It modulates feeding and dopamine-induced behavior in the central and peripheral nervous system. This receptor mediates its action by association with G proteins that activate a phosphatidylinositol-calcium second messenger system. This Rattus norvegicus (Rat) protein is Cholecystokinin receptor type A (Cckar).